A 593-amino-acid chain; its full sequence is ATP-dependent RNA helicase MRH4, mitochondrial (593 aa).

The N-terminal 106 residues, 1 to 106 (MFPLRAQSAS…QLRIFPTVRA (106 aa)), are a transit peptide targeting the mitochondrion. Low complexity predominate over residues 42–51 (GANGANRANG). The tract at residues 42–63 (GANGANRANGTNSSQPESQSSK) is disordered. A compositionally biased stretch (polar residues) spans 52-63 (TNSSQPESQSSK). Positions 130-137 (VLKPTPIQ) match the Q motif motif. The Helicase ATP-binding domain occupies 181–399 (INSLQKLKVF…NRIFPTDDSI (219 aa)). Residue 194 to 201 (AETGSGKT) coordinates ATP. The DEAD box motif lies at 347–350 (DEAD). In terms of domain architecture, Helicase C-terminal spans 433–593 (ALAQALYAIT…NAVKRGIQMG (161 aa)).

The protein belongs to the DEAD box helicase family. MRH4 subfamily.

The protein resides in the mitochondrion. The catalysed reaction is ATP + H2O = ADP + phosphate + H(+). In terms of biological role, ATP-binding RNA helicase involved in mitochondrial RNA metabolism. Required for maintenance of mitochondrial DNA. The chain is ATP-dependent RNA helicase MRH4, mitochondrial (MRH4) from Scheffersomyces stipitis (strain ATCC 58785 / CBS 6054 / NBRC 10063 / NRRL Y-11545) (Yeast).